The chain runs to 328 residues: Ankyrin repeat domain-containing protein 2 (328 aa).

Ser36 is subject to Phosphoserine. Ser68 is subject to Phosphoserine; by PKB/AKT2. The segment at Arg96–Val116 is disordered. 5 ANK repeats span residues Val116–Thr145, Phe149–Phe178, Leu182–Val211, Leu215–Ala244, and Glu248–Ala277. The segment at Arg297 to Gln328 is disordered.

As to quaternary structure, interacts with ID3; both proteins cooperate in myoblast differentiation. Interacts with TTN/titin. Interacts (via ANK repeats) with TCAP; the interaction is direct. Interacts with TJP1 (via PDZ domains). Interacts with PML; the interaction is direct. Interacts with p53/TP53. Interacts with YBX1. Interacts with AKT2. In terms of processing, phosphorylation at Ser-68 by PKB/AKT2 in response to oxidative stress induces translocation to the nucleus and negatively regulates myoblast differentiation. In terms of tissue distribution, expressed by myoblasts (at protein level). Expressed in skeletal and cardiac muscles.

The protein localises to the cytoplasm. The protein resides in the myofibril. Its subcellular location is the sarcomere. It localises to the i band. It is found in the cytosol. The protein localises to the nucleus. The protein resides in the PML body. In terms of biological role, functions as a negative regulator of myocyte differentiation. May interact with both sarcoplasmic structural proteins and nuclear proteins to regulate gene expression during muscle development and in response to muscle stress. This chain is Ankyrin repeat domain-containing protein 2 (Ankrd2), found in Mus musculus (Mouse).